The sequence spans 132 residues: Acid shock protein (132 aa).

The N-terminal stretch at 1–21 is a signal peptide; the sequence is MKKVLALIVAATMGLSSVAFA. The propeptide occupies 22 to 69; the sequence is AETTAAATAAPAATSTTAAPAVEKAAPAKATHHKKHKATKQTTEQKAQ. Residues 30–50 show a composition bias toward low complexity; it reads AAPAATSTTAAPAVEKAAPAK. The disordered stretch occupies residues 30–132; it reads AAPAATSTTA…AKKSATAPAA (103 aa). A compositionally biased stretch (basic residues) spans 51-60; it reads ATHHKKHKAT. The span at 61-99 shows a compositional bias: low complexity; that stretch reads KQTTEQKAQAAKKAVKKAPAQKAQAAKKAVKKAPVQKAQ. Over residues 100-124 the composition is skewed to basic residues; that stretch reads AAKKHVKKAPAQKAQAAKKHHKTAK.

This sequence belongs to the Asr family. Post-translationally, proteolytic processing gives rise to the active protein.

Its subcellular location is the periplasm. Its function is as follows. Required for growth and/or survival at acidic conditions. The polypeptide is Acid shock protein (Yersinia enterocolitica serotype O:8 / biotype 1B (strain NCTC 13174 / 8081)).